Here is a 271-residue protein sequence, read N- to C-terminus: uncharacterized protein (271 aa).

The first 18 residues, 1-18, serve as a signal peptide directing secretion; the sequence is MKGFFLIAGFLLFARALC. Residues 19-187 are Lumenal-facing; it reads ASWNVEEGTL…FSPPPKRANY (169 aa). A helical membrane pass occupies residues 188–208; it reads FLSICFSVSVVVSLIGLLGVW. At 209–230 the chain is on the cytoplasmic side; that stretch reads QKLLPKSNVYSVSSSSFARTFG. The chain crosses the membrane as a helical span at residues 231–251; the sequence is FASLAVAEILLFIYWTSLSIF. Topologically, residues 252-271 are lumenal; it reads QFGAYAAGVAIMCGIAAKSL.

Its subcellular location is the endoplasmic reticulum membrane. This is an uncharacterized protein from Schizosaccharomyces pombe (strain 972 / ATCC 24843) (Fission yeast).